The sequence spans 418 residues: F-box/kelch-repeat protein SKIP20 (418 aa).

The 48-residue stretch at 14-61 (DLIPGLPEELAIECLVRVPFQFHSSIKSVCRSWKCVISSRSFIKERIG) folds into the F-box domain. The interval 79 to 104 (PSPAMMEGGEMSQKKKEEEEGESQMT) is disordered. Kelch repeat units lie at residues 104 to 150 (TQQL…AIQD), 153 to 206 (KVLL…SVGS), 208 to 255 (KVYV…SMAT), and 258 to 314 (GFCV…EFPG).

Part of a SCF (ASK-cullin-F-box) protein ligase complex. Interacts with SKP1A/ASK1 and SPK1B/ASK2.

The protein resides in the nucleus. It functions in the pathway protein modification; protein ubiquitination. Component of SCF(ASK-cullin-F-box) E3 ubiquitin ligase complexes, which may mediate the ubiquitination and subsequent proteasomal degradation of target proteins. This chain is F-box/kelch-repeat protein SKIP20 (SKIP20), found in Arabidopsis thaliana (Mouse-ear cress).